A 90-amino-acid polypeptide reads, in one-letter code: Small ribosomal subunit protein uS15c (90 aa).

This sequence belongs to the universal ribosomal protein uS15 family. In terms of assembly, part of the 30S ribosomal subunit.

The protein resides in the plastid. The protein localises to the chloroplast. The sequence is that of Small ribosomal subunit protein uS15c (rps15) from Liriodendron tulipifera (Tuliptree).